A 78-amino-acid polypeptide reads, in one-letter code: Conotoxin Cal6.3a (78 aa).

Positions M1–A21 are cleaved as a signal peptide. Positions M22–P26 are excised as a propeptide. Intrachain disulfides connect C38–C49, C41–C53, and C48–C56. Position 76 is a glutamine amide (Q76).

Expressed by the venom duct.

The protein localises to the secreted. Functionally, probable neurotoxin with unknown target. Possibly targets ion channels. The sequence is that of Conotoxin Cal6.3a from Californiconus californicus (California cone).